Reading from the N-terminus, the 125-residue chain is Immunoglobulin heavy variable 4-39 (125 aa).

The first 26 residues, 1–26 (MDLMCKKMKHLWFFLLLVAAPRWVLS), serve as a signal peptide directing secretion. The interval 27 to 51 (QLQLQESGPGLVKPSETLSLTCTVS) is framework-1. The 99-residue stretch at 27–125 (QLQLQESGPG…ADTAVYYCAR (99 aa)) folds into the Ig-like domain. Cys48 and Cys123 are joined by a disulfide. The complementarity-determining-1 stretch occupies residues 52–61 (GGSISSSSYY). Residues 62-78 (WGWIRQPPGKGLEWIGS) form a framework-2 region. The tract at residues 79–85 (IYYSGST) is complementarity-determining-2. A framework-3 region spans residues 86 to 123 (YYNPSLKSRVTISVDTSKNQFSLKLSSVTAADTAVYYC). Positions 124–125 (AR) are complementarity-determining-3.

As to quaternary structure, immunoglobulins are composed of two identical heavy chains and two identical light chains; disulfide-linked.

It localises to the secreted. The protein localises to the cell membrane. In terms of biological role, v region of the variable domain of immunoglobulin heavy chains that participates in the antigen recognition. Immunoglobulins, also known as antibodies, are membrane-bound or secreted glycoproteins produced by B lymphocytes. In the recognition phase of humoral immunity, the membrane-bound immunoglobulins serve as receptors which, upon binding of a specific antigen, trigger the clonal expansion and differentiation of B lymphocytes into immunoglobulins-secreting plasma cells. Secreted immunoglobulins mediate the effector phase of humoral immunity, which results in the elimination of bound antigens. The antigen binding site is formed by the variable domain of one heavy chain, together with that of its associated light chain. Thus, each immunoglobulin has two antigen binding sites with remarkable affinity for a particular antigen. The variable domains are assembled by a process called V-(D)-J rearrangement and can then be subjected to somatic hypermutations which, after exposure to antigen and selection, allow affinity maturation for a particular antigen. The polypeptide is Immunoglobulin heavy variable 4-39 (Homo sapiens (Human)).